A 271-amino-acid polypeptide reads, in one-letter code: Formamidopyrimidine-DNA glycosylase (271 aa).

Pro2 functions as the Schiff-base intermediate with DNA in the catalytic mechanism. The Proton donor role is filled by Glu3. Lys57 functions as the Proton donor; for beta-elimination activity in the catalytic mechanism. Residues His90, Arg109, and Lys151 each contribute to the DNA site. The FPG-type zinc finger occupies 236 to 270 (HVYGRGGETCTECGHLLSEIRLGQRTTVFCSLCQT). Arg260 functions as the Proton donor; for delta-elimination activity in the catalytic mechanism.

Belongs to the FPG family. Monomer. It depends on Zn(2+) as a cofactor.

It carries out the reaction Hydrolysis of DNA containing ring-opened 7-methylguanine residues, releasing 2,6-diamino-4-hydroxy-5-(N-methyl)formamidopyrimidine.. The catalysed reaction is 2'-deoxyribonucleotide-(2'-deoxyribose 5'-phosphate)-2'-deoxyribonucleotide-DNA = a 3'-end 2'-deoxyribonucleotide-(2,3-dehydro-2,3-deoxyribose 5'-phosphate)-DNA + a 5'-end 5'-phospho-2'-deoxyribonucleoside-DNA + H(+). Functionally, involved in base excision repair of DNA damaged by oxidation or by mutagenic agents. Acts as a DNA glycosylase that recognizes and removes damaged bases. Has a preference for oxidized purines, such as 7,8-dihydro-8-oxoguanine (8-oxoG). Has AP (apurinic/apyrimidinic) lyase activity and introduces nicks in the DNA strand. Cleaves the DNA backbone by beta-delta elimination to generate a single-strand break at the site of the removed base with both 3'- and 5'-phosphates. The protein is Formamidopyrimidine-DNA glycosylase of Shewanella amazonensis (strain ATCC BAA-1098 / SB2B).